The following is a 182-amino-acid chain: Bifunctional dihydrofolate reductase-thymidylate synthase (182 aa).

The DHFR domain maps to 1 to 182; that stretch reads AICACCKVLN…YFTRINNAYT (182 aa). Position 25 to 31 (25 to 31) interacts with NADP(+); that stretch reads GLGNAGG. Aspartate 40 is a substrate binding site. Residues 93–95 and 114–117 each bind NADP(+); these read KTS and LSRT. Residues isoleucine 154, tyrosine 160, and threonine 175 each coordinate substrate. 155–162 is a binding site for NADP(+); that stretch reads GGASVYKE.

This sequence in the N-terminal section; belongs to the dihydrofolate reductase family. The protein in the C-terminal section; belongs to the thymidylate synthase family. In terms of assembly, homodimer.

The enzyme catalyses (6S)-5,6,7,8-tetrahydrofolate + NADP(+) = 7,8-dihydrofolate + NADPH + H(+). It carries out the reaction dUMP + (6R)-5,10-methylene-5,6,7,8-tetrahydrofolate = 7,8-dihydrofolate + dTMP. Its pathway is cofactor biosynthesis; tetrahydrofolate biosynthesis; 5,6,7,8-tetrahydrofolate from 7,8-dihydrofolate: step 1/1. Functionally, bifunctional enzyme. Involved in de novo dTMP biosynthesis. Key enzyme in folate metabolism. Catalyzes an essential reaction for de novo glycine and purine synthesis, DNA precursor synthesis, and for the conversion of dUMP to dTMP. The sequence is that of Bifunctional dihydrofolate reductase-thymidylate synthase from Plasmodium vinckei.